The chain runs to 339 residues: tRNA N6-adenosine threonylcarbamoyltransferase (339 aa).

The Fe cation site is built by H117 and H121. Substrate is bound by residues 140–144, D173, G186, and N279; that span reads VVSGG. Fe cation is bound at residue D307.

Belongs to the KAE1 / TsaD family. It depends on Fe(2+) as a cofactor.

The protein localises to the cytoplasm. It catalyses the reaction L-threonylcarbamoyladenylate + adenosine(37) in tRNA = N(6)-L-threonylcarbamoyladenosine(37) in tRNA + AMP + H(+). Functionally, required for the formation of a threonylcarbamoyl group on adenosine at position 37 (t(6)A37) in tRNAs that read codons beginning with adenine. Is involved in the transfer of the threonylcarbamoyl moiety of threonylcarbamoyl-AMP (TC-AMP) to the N6 group of A37, together with TsaE and TsaB. TsaD likely plays a direct catalytic role in this reaction. The protein is tRNA N6-adenosine threonylcarbamoyltransferase of Syntrophomonas wolfei subsp. wolfei (strain DSM 2245B / Goettingen).